Here is a 173-residue protein sequence, read N- to C-terminus: MARMNRPAPVEVSYKNMRFLITHNPTNATLSSFIEDLKKYGATTVVRVCEVTYDKAPLEKDGITVVDWPFDDGAPPPGKVVEDWLSLLKNKFCDDPGSCVAVHCVAGLGRAPVLVALALIESGMKYEDAIQFIRQKRRGAINSKQLTYLEKYRPKQRLRFKDPHAHKTKCCIM.

The region spanning 8–161 is the Tyrosine-protein phosphatase domain; that stretch reads APVEVSYKNM…YRPKQRLRFK (154 aa). Cys-49 and Cys-104 are disulfide-bonded. The active-site Proton donor is Asp-72. The active-site Phosphocysteine intermediate is the Cys-104. Residue Arg-110 participates in substrate binding. Cys-170 carries the cysteine methyl ester modification. Residue Cys-170 is the site of S-farnesyl cysteine attachment. The propeptide at 171–173 is removed in mature form; sequence CIM.

It belongs to the protein-tyrosine phosphatase family. As to quaternary structure, interacts with tubulin. Post-translationally, farnesylated. Farnesylation is required for membrane targeting. Unfarnesylated forms are shifted into the nucleus.

It localises to the cell membrane. The protein localises to the early endosome. It catalyses the reaction O-phospho-L-tyrosyl-[protein] + H2O = L-tyrosyl-[protein] + phosphate. With respect to regulation, inhibited by sodium orthovanadate and peroxovanadium compounds, and by pentamidine. In terms of biological role, protein tyrosine phosphatase which stimulates progression from G1 into S phase during mitosis. Enhances cell proliferation, cell motility and invasive activity, and promotes cancer metastasis. May be involved in the progression of cardiac hypertrophy by inhibiting intracellular calcium mobilization in response to angiotensin II. In Bos taurus (Bovine), this protein is Protein tyrosine phosphatase type IVA 3 (PTP4A3).